A 428-amino-acid polypeptide reads, in one-letter code: Nuclear hormone receptor family member nhr-44 (428 aa).

The segment at residues S21–R98 is a DNA-binding region (nuclear receptor). 2 NR C4-type zinc fingers span residues C24–C44 and C61–C86. The NR LBD domain maps to S181–S427.

Belongs to the nuclear hormone receptor family.

Its subcellular location is the nucleus. In terms of biological role, orphan nuclear receptor. This is Nuclear hormone receptor family member nhr-44 (nhr-44) from Caenorhabditis elegans.